A 214-amino-acid chain; its full sequence is UPF0725 protein At1g19565 (214 aa).

Residues Glu-56–Glu-92 form a disordered region.

The protein belongs to the UPF0725 (EMB2204) family.

This chain is UPF0725 protein At1g19565, found in Arabidopsis thaliana (Mouse-ear cress).